The primary structure comprises 257 residues: Pantothenate synthetase (257 aa).

29 to 36 (MGNLHAGH) lines the ATP pocket. Histidine 36 (proton donor) is an active-site residue. Glutamine 60 provides a ligand contact to (R)-pantoate. Glutamine 60 lines the beta-alanine pocket. Position 145–148 (145–148 (GEKD)) interacts with ATP. Glutamine 151 is a binding site for (R)-pantoate. ATP-binding positions include valine 174 and 182-185 (LSSR).

This sequence belongs to the pantothenate synthetase family. In terms of assembly, homodimer.

The protein localises to the cytoplasm. The catalysed reaction is (R)-pantoate + beta-alanine + ATP = (R)-pantothenate + AMP + diphosphate + H(+). It functions in the pathway cofactor biosynthesis; (R)-pantothenate biosynthesis; (R)-pantothenate from (R)-pantoate and beta-alanine: step 1/1. Its function is as follows. Catalyzes the condensation of pantoate with beta-alanine in an ATP-dependent reaction via a pantoyl-adenylate intermediate. The chain is Pantothenate synthetase from Coxiella burnetii (strain CbuK_Q154) (Coxiella burnetii (strain Q154)).